Here is a 177-residue protein sequence, read N- to C-terminus: Nucleoside triphosphate/diphosphate phosphatase (177 aa).

Arginine 23 functions as the Proton donor in the catalytic mechanism. Positions 87, 103, 105, 107, 120, and 123 each coordinate Mg(2+).

Belongs to the Ntdp family. Requires Mg(2+) as cofactor.

The catalysed reaction is a ribonucleoside 5'-triphosphate + H2O = a ribonucleoside 5'-diphosphate + phosphate + H(+). It catalyses the reaction a ribonucleoside 5'-diphosphate + H2O = a ribonucleoside 5'-phosphate + phosphate + H(+). Its function is as follows. Has nucleoside phosphatase activity towards nucleoside triphosphates and nucleoside diphosphates. This is Nucleoside triphosphate/diphosphate phosphatase from Streptococcus thermophilus (strain CNRZ 1066).